The following is a 386-amino-acid chain: Orphan methyltransferase M.SssI (386 aa).

One can recognise an SAM-dependent MTase C5-type domain in the interval 11-386; it reads LRVFEAFAGI…LEAIIDKIGG (376 aa). Cysteine 141 is a catalytic residue.

This sequence belongs to the class I-like SAM-binding methyltransferase superfamily. C5-methyltransferase family.

It catalyses the reaction a 2'-deoxycytidine in DNA + S-adenosyl-L-methionine = a 5-methyl-2'-deoxycytidine in DNA + S-adenosyl-L-homocysteine + H(+). This de novo methylase acts completely and exclusively on CG residues in DNA; methylates unmethylated and hemi-methylated DNA. The chain is Orphan methyltransferase M.SssI (sssIM) from Spiroplasma monobiae (strain ATCC 33825 / MQ-1).